Here is a 380-residue protein sequence, read N- to C-terminus: Phospho-N-acetylmuramoyl-pentapeptide-transferase (380 aa).

Transmembrane regions (helical) follow at residues 25–45 (RAAAAFVTALLVSFILGPAII), 70–90 (TTPTMGGLIILAATFAPVLLW), 98–118 (VLLAMAVTAWMGVIGFLDDYL), 142–162 (VLCGLGLGAYLLLSPISTLPG), 173–193 (VLVVPAVAWAAWLYIPWVTFI), 209–229 (GLSSGLVAIAVLTLGLFAYVL), 245–265 (GAGELTVFCAAVVGACIGFLW), 272–294 (QVFMGDTGSLALGGAVGAIAILL), and 357–377 (QVVVRFWIIGILCAILALSTL).

This sequence belongs to the glycosyltransferase 4 family. MraY subfamily. The cofactor is Mg(2+).

The protein localises to the cell inner membrane. The catalysed reaction is UDP-N-acetyl-alpha-D-muramoyl-L-alanyl-gamma-D-glutamyl-meso-2,6-diaminopimeloyl-D-alanyl-D-alanine + di-trans,octa-cis-undecaprenyl phosphate = di-trans,octa-cis-undecaprenyl diphospho-N-acetyl-alpha-D-muramoyl-L-alanyl-D-glutamyl-meso-2,6-diaminopimeloyl-D-alanyl-D-alanine + UMP. It functions in the pathway cell wall biogenesis; peptidoglycan biosynthesis. Its function is as follows. Catalyzes the initial step of the lipid cycle reactions in the biosynthesis of the cell wall peptidoglycan: transfers peptidoglycan precursor phospho-MurNAc-pentapeptide from UDP-MurNAc-pentapeptide onto the lipid carrier undecaprenyl phosphate, yielding undecaprenyl-pyrophosphoryl-MurNAc-pentapeptide, known as lipid I. The polypeptide is Phospho-N-acetylmuramoyl-pentapeptide-transferase (Gemmatimonas aurantiaca (strain DSM 14586 / JCM 11422 / NBRC 100505 / T-27)).